The sequence spans 1870 residues: Dedicator of cytokinesis protein 5 (1870 aa).

An SH3 domain is found at 8–69 (KRQKYGVAIY…PETYIHLKEA (62 aa)). A Phosphoserine modification is found at serine 365. Positions 443 to 627 (RNDIYVTLIH…DSFQIATLIC (185 aa)) constitute a C2 DOCK-type domain. N6-acetyllysine is present on lysine 818. Residues 1231 to 1642 (YKEKKREDIY…VEKHYGVITL (412 aa)) enclose the DOCKER domain. Residues 1679–1702 (VVSTSSNSSDNAPSRPGSDGSILE) are disordered. 4 positions are modified to phosphoserine: serine 1756, serine 1766, serine 1785, and serine 1789. Positions 1772 to 1870 (NRLSPFHGSS…GIPTSEPGSQ (99 aa)) are disordered. Residues 1784–1794 (QSTPLSPPPLT) are compositionally biased toward pro residues. At threonine 1794 the chain carries Phosphothreonine. Residues 1797–1808 (ATRTLSSPSLQT) show a composition bias toward polar residues. Position 1814 is a phosphothreonine (threonine 1814). Residues 1815–1824 (PVPPPPPPKS) show a composition bias toward pro residues. Serine 1834 and serine 1869 each carry phosphoserine.

It belongs to the DOCK family. As to quaternary structure, interacts with CRK and CRKL. Interacts (via N-terminus) with tensin TNS3 (via N-terminus); the interaction increases DOCK5 guanine nucleotide exchange activity towards Rac. Interacts with ELMO1.

It is found in the cytoplasm. The protein resides in the cell membrane. Its subcellular location is the cell projection. The protein localises to the podosome. Functionally, guanine nucleotide exchange factor (GEF) for Rho and Rac. GEF proteins activate small GTPases by exchanging bound GDP for free GTP. Along with DOCK1, mediates CRK/CRKL regulation of epithelial and endothelial cell spreading and migration on type IV collagen. The sequence is that of Dedicator of cytokinesis protein 5 (DOCK5) from Homo sapiens (Human).